Reading from the N-terminus, the 190-residue chain is Large ribosomal subunit protein bL25 (190 aa).

Belongs to the bacterial ribosomal protein bL25 family. CTC subfamily. In terms of assembly, part of the 50S ribosomal subunit; part of the 5S rRNA/L5/L18/L25 subcomplex. Contacts the 5S rRNA. Binds to the 5S rRNA independently of L5 and L18.

This is one of the proteins that binds to the 5S RNA in the ribosome where it forms part of the central protuberance. In Neisseria meningitidis serogroup C / serotype 2a (strain ATCC 700532 / DSM 15464 / FAM18), this protein is Large ribosomal subunit protein bL25.